Consider the following 340-residue polypeptide: NAD-dependent epimerase/dehydratase terH (340 aa).

A helical membrane pass occupies residues isoleucine 7–isoleucine 27. N-linked (GlcNAc...) asparagine glycosylation is present at asparagine 139. Tyrosine 176 contributes to the NADP(+) binding site.

Belongs to the NAD(P)-dependent epimerase/dehydratase family. Dihydroflavonol-4-reductase subfamily.

It is found in the membrane. In terms of biological role, NAD-dependent epimerase/dehydratase; part of the gene cluster that mediates the biosynthesis of terrein, a fungal metabolite with ecological, antimicrobial, antiproliferative, and antioxidative activities. The first step in the pathway is performed by the polyketide synthase terA that produces 4-hydroxy-6-methylpyranon (4-HMP), orsellinic acid (OA), and 2,3-dehydro-6-hydroxymellein (2,3-dehydro-6-HM) by condensing acetyl-CoA with two, three, or four malonyl-CoA units, respectively. 4-HMP and OA are not pathway intermediates, but are rather shunt or side products. 2,3-dehydro-6-HM is further converted to 6-hydroxymellein (6-HM) by the 6-hydroxymellein synthase terB. The monooxygenases terC and terD, the multicopper oxidase terE and the Kelch-like protein terF are then involved in the transformation of 6-HM to terrein. Even if they are co-regulated with the other terrein cluster genes, terH and terI seem to be dispensable for terrein production; whereas one or both of the 2 transporters terG and terJ are probably required for efficient secretion of metabolites. This is NAD-dependent epimerase/dehydratase terH from Aspergillus terreus (strain NIH 2624 / FGSC A1156).